The primary structure comprises 421 residues: MLFKSFALTLLFAAARVQAASNCSSGPYNISAQGTLDELNSCTVLNGDLYISDAGNSGITTLTVNGIESVQGDVVVSDGQYLTSLSFPSLKNVSGAFNVNNMIRMNNLATPELTSVGSLNLAVLPNLQELQFNAGLSDSDSVVIDDTQLQAIDGISLDSVTTFQVTNNRYIQEITMEGLESAQNIQISANSKGVSVNFSKLSNVTTATFDGISNVFIGNLKSAAGNLYFSNTTLDNISVPYLTEIGQSFAVLYSPELTSLNFPNLTTVGGGFVINDTGLTSIDGFPVISEIGGGLVLLGNFSSIDMPDLSDVKGALTVETKATNFTCPWSNDDSVIKGDDFTCQGSVATISATSSYDLSSTVSATSGSATSATGSATTTSYSSDSSASSSSSSSHESSAASNGFTAGALVLGSLLVAALAM.

The first 19 residues, 1–19, serve as a signal peptide directing secretion; it reads MLFKSFALTLLFAAARVQA. N-linked (GlcNAc...) asparagine glycosylation is found at N22, N29, N92, N197, N203, N231, N236, N264, N275, N300, and N324. The tract at residues 365-394 is disordered; sequence TSGSATSATGSATTTSYSSDSSASSSSSSS. S398 carries GPI-anchor amidated serine lipidation. A propeptide spans 399–421 (removed in mature form); the sequence is AASNGFTAGALVLGSLLVAALAM. A helical transmembrane segment spans residues 401–421; it reads SNGFTAGALVLGSLLVAALAM.

The protein belongs to the SPS2 family. The GPI-anchor is attached to the protein in the endoplasmic reticulum and serves to target the protein to the cell surface. There, the glucosamine-inositol phospholipid moiety is cleaved off and the GPI-modified mannoprotein is covalently attached via its lipidless GPI glycan remnant to the 1,6-beta-glucan of the outer cell wall layer. In terms of processing, extensively N-glycosylated.

The protein resides in the cell membrane. Its subcellular location is the secreted. The protein localises to the cell wall. Functionally, involved in the negative feedback regulation of pmk1 cell integrity signaling and is linked to cellular calcium signaling. This Schizosaccharomyces pombe (strain 972 / ATCC 24843) (Fission yeast) protein is Cell wall protein ecm33 (ecm33).